The following is a 160-amino-acid chain: Glyoxalase domain-containing protein 5 (160 aa).

In terms of domain architecture, VOC spans R33–Y153.

The protein belongs to the glyoxalase I family.

This is Glyoxalase domain-containing protein 5 (glod5) from Xenopus tropicalis (Western clawed frog).